The chain runs to 567 residues: MLLSKHDYASLFGPTIGDSVRLADTELWIRIEKDFTVYGEEVKFGGGKVIRDGMGQGQMSSKDCVDLVLTNAVILDYWGIIKADIGINNGRISGIGKAGNPDVQPNVTISIGPGTEIIAAEGKIVTAGGIDAHVHFICPQQVEEALCSGITTFIGGGTGPATGSNATTCTPGPWFISRMLQVADTLPINIGVTGKGSASFPDALEEQIIAGAIGLKVHEDWGATPAAIDCCLNVADRFDIQVSMHTDTLNESGFVEDTLSAIKGRTVHAYHTEGAGGGHSPDIIRMCGFSNVLPSSTNPTMPYTVNTIDEHLDMMMICHNLNPNLPEDMAFSESRIRRETIAAEDVLHDLGALSMISSDSQAMGRVGEVILRTWQTAHKMKQQRGSLLGDATRYDDNVRVKRYIAKYTINPAITHGISHEVGSVEIGKLADLVLWSPVFFGVKPELIIKGGMIISSVMGDPNASIPTPQPVHYRLMFGARGKAKHATRMTFLSQVAYNSELTDYLKLVSLIGEVRHCRNIQKKHMINNSWQPVIEVDSQTYQVRANGELLTCEPASVLPMSQRYFLF.

In terms of domain architecture, Urease spans 128-567 (GGIDAHVHFI…LPMSQRYFLF (440 aa)). Residues H133, H135, and K216 each contribute to the Ni(2+) site. At K216 the chain carries N6-carboxylysine. Substrate is bound at residue H218. Residues H245 and H271 each coordinate Ni(2+). Residue H319 is the Proton donor of the active site. D359 is a Ni(2+) binding site.

This sequence belongs to the metallo-dependent hydrolases superfamily. Urease alpha subunit family. In terms of assembly, heterotrimer of UreA (gamma), UreB (beta) and UreC (alpha) subunits. Three heterotrimers associate to form the active enzyme. Requires Ni cation as cofactor. Post-translationally, carboxylation allows a single lysine to coordinate two nickel ions.

The protein resides in the cytoplasm. It catalyses the reaction urea + 2 H2O + H(+) = hydrogencarbonate + 2 NH4(+). Its pathway is nitrogen metabolism; urea degradation; CO(2) and NH(3) from urea (urease route): step 1/1. This chain is Urease subunit alpha, found in Blochmanniella pennsylvanica (strain BPEN).